The sequence spans 315 residues: Ribosomal protein L11 methyltransferase (315 aa).

Residues T163, G185, D207, and N249 each contribute to the S-adenosyl-L-methionine site.

The protein belongs to the methyltransferase superfamily. PrmA family.

The protein resides in the cytoplasm. It carries out the reaction L-lysyl-[protein] + 3 S-adenosyl-L-methionine = N(6),N(6),N(6)-trimethyl-L-lysyl-[protein] + 3 S-adenosyl-L-homocysteine + 3 H(+). Methylates ribosomal protein L11. This Lactobacillus helveticus (strain DPC 4571) protein is Ribosomal protein L11 methyltransferase.